Consider the following 219-residue polypeptide: MSEKAVVVYSGGMDSFTVLNTAIQNGLDVYALSFNYGQKHSKELEVAAHVCRKLGISHKVVDITAINSLMANSSLTGDAEIPEGHYEDDNMKSTVVPNRNMVLLSMAIAYAVSLEAGKVYYGAHSGDHHIYPDCRPEFVEAMNAVSKIANYQSVEIVTPFLHSSKGEILKAGLDMNLNYANTWTCYNGREKSCGKCGACYERLEAFAEQGKTDPLEYEA.

9–19 is an ATP binding site; sequence YSGGMDSFTVL. Zn(2+) contacts are provided by C185, C193, C196, and C199.

The protein belongs to the QueC family. Zn(2+) is required as a cofactor.

It catalyses the reaction 7-carboxy-7-deazaguanine + NH4(+) + ATP = 7-cyano-7-deazaguanine + ADP + phosphate + H2O + H(+). Its pathway is purine metabolism; 7-cyano-7-deazaguanine biosynthesis. Catalyzes the ATP-dependent conversion of 7-carboxy-7-deazaguanine (CDG) to 7-cyano-7-deazaguanine (preQ(0)). The protein is 7-cyano-7-deazaguanine synthase of Marinomonas sp. (strain MWYL1).